A 360-amino-acid polypeptide reads, in one-letter code: Mannose-1-phosphate guanylyltransferase catalytic subunit beta (360 aa).

The segment at 2 to 222 (KALILVGGYG…QGFWMDIGQP (221 aa)) is substrate-binding domain. Asp-110 lines the GDP-alpha-D-mannose pocket. Asp-110 lines the Mg(2+) pocket. Lys-162 is a catalytic residue. Asp-218 lines the GDP-alpha-D-mannose pocket. Asp-218 contributes to the Mg(2+) binding site. Positions 245-360 (RAGPGFLGNV…DSVPEPRIIM (116 aa)) are hexapeptide repeat domain.

Belongs to the transferase hexapeptide repeat family. As to quaternary structure, component of the GMPPA-GMPPB mannose-1-phosphate guanylyltransferase complex composed of 4 gmppa subunits and 8 gmppb subunits; the complex is organized into three layers, a central layer made up of 2 gmppa dimers sandwiched between two layers each made up of 2 gmppb dimers. Catalytic activity of gmppb is reduced when part of the complex and binding of GDP-alpha-D-Mannose by gmppa induces allosteric feedback inhibition of gmppb. Requires Mg(2+) as cofactor.

The catalysed reaction is alpha-D-mannose 1-phosphate + GTP + H(+) = GDP-alpha-D-mannose + diphosphate. It participates in nucleotide-sugar biosynthesis; GDP-alpha-D-mannose biosynthesis; GDP-alpha-D-mannose from alpha-D-mannose 1-phosphate (GTP route): step 1/1. With respect to regulation, enzyme activity is reduced by incorporation into the GMPPA-GMPPB mannose-1-phosphate guanylyltransferase complex. Allosterically inhibited, when part of the GMPPA-GMPPB complex, by GDP-alpha-D-mannose binding to GMPPA. Its function is as follows. Catalytic subunit of the GMPPA-GMPPB mannose-1-phosphate guanylyltransferase complex. Catalyzes the formation of GDP-mannose, an essential precursor of glycan moieties of glycoproteins and glycolipids. Can catalyze the reverse reaction in vitro. Together with GMPPA regulates GDP-alpha-D-mannose levels. This is Mannose-1-phosphate guanylyltransferase catalytic subunit beta (gmppb) from Danio rerio (Zebrafish).